We begin with the raw amino-acid sequence, 417 residues long: Serine/threonine transporter SstT (417 aa).

The next 8 membrane-spanning stretches (helical) occupy residues 21–41, 49–69, 83–103, 142–162, 193–213, 218–238, 291–311, and 331–351; these read ILAG…VAKM, FISA…MASI, ILVL…VASF, ALIN…GLAL, IGIF…ALAG, LLVL…LIVF, IPLG…ILTL, and LVAA…LLLI.

It belongs to the dicarboxylate/amino acid:cation symporter (DAACS) (TC 2.A.23) family.

It is found in the cell inner membrane. The catalysed reaction is L-serine(in) + Na(+)(in) = L-serine(out) + Na(+)(out). It catalyses the reaction L-threonine(in) + Na(+)(in) = L-threonine(out) + Na(+)(out). Functionally, involved in the import of serine and threonine into the cell, with the concomitant import of sodium (symport system). The polypeptide is Serine/threonine transporter SstT (Proteus mirabilis (strain HI4320)).